We begin with the raw amino-acid sequence, 135 residues long: Large ribosomal subunit protein eL32 (135 aa).

This sequence belongs to the eukaryotic ribosomal protein eL32 family. As to quaternary structure, component of the large ribosomal subunit.

Its subcellular location is the cytoplasm. Functionally, component of the large ribosomal subunit. The ribosome is a large ribonucleoprotein complex responsible for the synthesis of proteins in the cell. This chain is Large ribosomal subunit protein eL32 (rpl32), found in Ictalurus punctatus (Channel catfish).